Here is a 307-residue protein sequence, read N- to C-terminus: Synaptophysin (307 aa).

Residues 1 to 19 lie on the Cytoplasmic side of the membrane; sequence MDVVNQLVAGGQFRVVKEP. The MARVEL domain occupies 15 to 222; that stretch reads VVKEPLGFVK…NLWFVFKETG (208 aa). Residues 20–43 form a helical membrane-spanning segment; that stretch reads LGFVKVLQWVFAIFAFATCGSYTG. Over 44–101 the chain is Vesicular; that stretch reads ELRLSVECANKTESALNIEVEFEYPFRLHQVYFDAPSCVKGGTTKIFLVGDYSSSAEF. Residue N53 is glycosylated (N-linked (GlcNAc...) asparagine). Y75 carries the phosphotyrosine modification. The helical transmembrane segment at 102-125 threads the bilayer; it reads FVTVAVFAFLYSMGALATYIFLQN. Residues 126 to 132 are Cytoplasmic-facing; the sequence is KYRENNK. The helical transmembrane segment at 133-156 threads the bilayer; it reads GPMMDFLATAVFAFMWLVSSSAWA. Residues 157–194 are Vesicular-facing; sequence KGLSDVKMATDPENIIKEMPMCRQTGNTCKELRDPVTS. A helical membrane pass occupies residues 195–218; the sequence is GLNTSVVFGFLNLVLWVGNLWFVF. The Cytoplasmic segment spans residues 219 to 307; it reads KETGWAAPFM…GAPTSFSNQM (89 aa). At T221 the chain carries Phosphothreonine. Residues 233-307 form a disordered region; that stretch reads GAPEKQPAPG…GAPTSFSNQM (75 aa). Gly residues predominate over residues 248-258; that stretch reads AGYGQGPGGYG. A repeats, Gly-rich region spans residues 249-298; that stretch reads GYGQGPGGYGPQDSYGPQGGYQPDYGQPASGGGGYGPQGDYGQQGYGQQG. Residues 259–276 are compositionally biased toward low complexity; the sequence is PQDSYGPQGGYQPDYGQP. Phosphotyrosine is present on residues Y273 and Y289. Over residues 277 to 296 the composition is skewed to gly residues; the sequence is ASGGGGYGPQGDYGQQGYGQ.

It belongs to the synaptophysin/synaptobrevin family. As to quaternary structure, homohexamer or homotetramer. Interacts with SRCIN1. Interacts with VAMP2; the interaction is inhibited by interaction of VAPM2 with SEPT8. Ubiquitinated; mediated by SIAH1 or SIAH2 and leading to its subsequent proteasomal degradation. In terms of processing, phosphorylated by SRC. In terms of tissue distribution, expressed in the brain with expression in the cerebrum and the cerebellum.

It localises to the cytoplasmic vesicle. The protein localises to the secretory vesicle. It is found in the synaptic vesicle membrane. Its subcellular location is the synapse. The protein resides in the synaptosome. Functionally, possibly involved in structural functions as organizing other membrane components or in targeting the vesicles to the plasma membrane. Involved in the regulation of short-term and long-term synaptic plasticity. In Rattus norvegicus (Rat), this protein is Synaptophysin (Syp).